The sequence spans 132 residues: Phosphomevalonate dehydratase small subunit (132 aa).

S62 acts as the Proton acceptor in catalysis.

Belongs to the AcnX type II small subunit family. Heterodimer composed of a large subunit (PMDh-L) and a small subunit (PMDh-S).

The enzyme catalyses (R)-5-phosphomevalonate = (2E)-3-methyl-5-phosphooxypent-2-enoate + H2O. Its pathway is isoprenoid biosynthesis; isopentenyl diphosphate biosynthesis via mevalonate pathway. Component of a hydro-lyase that catalyzes the dehydration of mevalonate 5-phosphate (MVA5P) to form trans-anhydromevalonate 5-phosphate (tAHMP). Involved in the archaeal mevalonate (MVA) pathway, which provides fundamental precursors for isoprenoid biosynthesis, such as isopentenyl diphosphate (IPP) and dimethylallyl diphosphate (DMAPP). The chain is Phosphomevalonate dehydratase small subunit from Methanocella arvoryzae (strain DSM 22066 / NBRC 105507 / MRE50).